The following is a 94-amino-acid chain: Large ribosomal subunit protein bL27 (94 aa).

Positions 1–9 (MLRLDLQFF) are excised as a propeptide.

Belongs to the bacterial ribosomal protein bL27 family. In terms of processing, the N-terminus is cleaved by ribosomal processing cysteine protease Prp.

The protein is Large ribosomal subunit protein bL27 of Bacillus pumilus (strain SAFR-032).